Here is a 138-residue protein sequence, read N- to C-terminus: Centromere protein S (138 aa).

N-acetylmethionine is present on Met-1. The interval 110-138 is disordered; sequence RKAQKKKKSEDGSKNSRQPAEAGVVESEN.

Belongs to the TAF9 family. CENP-S/MHF1 subfamily. As to quaternary structure, heterodimer with CENPX, sometimes called MHF; this interaction stabilizes both partners. MHF heterodimers can assemble to form tetrameric structures. MHF also coassemble with CENPT-CENPW heterodimers at centromeres to form the tetrameric CENP-T-W-S-X complex. Forms a discrete complex with FANCM and CENPX, called FANCM-MHF; this interaction, probably mediated by direct binding between CENPS and FANCM, leads to synergistic activation of double-stranded DNA binding and strongly stimulates FANCM-mediated DNA remodeling. Recruited by FANCM to the Fanconi anemia (FA) core complex, which consists of CENPS, CENPX, FANCA, FANCB, FANCC, FANCE, FANCF, FANCG, FANCL, FANCM, FAAP24 and FAAP100. The FA core complex associates with Bloom syndrome (BLM) complex, which consists of at least BLM, DNA topoisomerase 3-alpha (TOP3A), RMI1/BLAP75, RPA1/RPA70 and RPA2/RPA32. The super complex between FA and BLM is called BRAFT. Component of the CENPA-CAD complex, composed of CENPI, CENPK, CENPL, CENPO, CENPP, CENPQ, CENPR and CENPS. The CENPA-CAD complex is probably recruited on centromeres by the CENPA-NAC complex, composed of at least CENPA, CENPC, CENPH, CENPM, CENPN, CENPT and CENPU. As to expression, ubiquitously expressed.

It localises to the nucleus. Its subcellular location is the chromosome. It is found in the centromere. The protein localises to the kinetochore. In terms of biological role, DNA-binding component of the Fanconi anemia (FA) core complex. Required for the normal activation of the FA pathway, leading to monoubiquitination of the FANCI-FANCD2 complex in response to DNA damage, cellular resistance to DNA cross-linking drugs, and prevention of chromosomal breakage. In complex with CENPX (MHF heterodimer), crucial cofactor for FANCM in both binding and ATP-dependent remodeling of DNA. Stabilizes FANCM. In complex with CENPX and FANCM (but not other FANC proteins), rapidly recruited to blocked forks and promotes gene conversion at blocked replication forks. In complex with CENPT, CENPW and CENPX (CENP-T-W-S-X heterotetramer), involved in the formation of a functional kinetochore outer plate, which is essential for kinetochore-microtubule attachment and faithful mitotic progression. As a component of MHF and CENP-T-W-S-X complexes, binds DNA and bends it to form a nucleosome-like structure. DNA-binding function is fulfilled in the presence of CENPX, with the following preference for DNA substates: Holliday junction &gt; double-stranded &gt; splay arm &gt; single-stranded. Does not bind DNA on its own. This Homo sapiens (Human) protein is Centromere protein S (CENPS).